We begin with the raw amino-acid sequence, 726 residues long: Beta-glucosidase cel3A (726 aa).

Positions 1 to 20 (MASRLVAGLQVLALAGTATA) are cleaved as a signal peptide. 2 N-linked (GlcNAc...) asparagine glycosylation sites follow: asparagine 223 and asparagine 592.

Belongs to the glycosyl hydrolase 3 family.

It is found in the secreted. The enzyme catalyses Hydrolysis of terminal, non-reducing beta-D-glucosyl residues with release of beta-D-glucose.. It functions in the pathway glycan metabolism; cellulose degradation. In terms of biological role, beta-glucosidases are one of a number of cellulolytic enzymes involved in the degradation of cellulosic biomass. Catalyzes the last step releasing glucose from the inhibitory cellobiose. Has a broad substrate specificity but preferentially hydrolyzes highly polymerized 1,3- and 1,4-beta-glucans. The polypeptide is Beta-glucosidase cel3A (Pyricularia oryzae (strain 70-15 / ATCC MYA-4617 / FGSC 8958) (Rice blast fungus)).